Reading from the N-terminus, the 292-residue chain is 4-hydroxy-tetrahydrodipicolinate synthase (292 aa).

Threonine 45 is a pyruvate binding site. The active-site Proton donor/acceptor is tyrosine 133. Catalysis depends on lysine 161, which acts as the Schiff-base intermediate with substrate. Isoleucine 203 is a binding site for pyruvate.

It belongs to the DapA family. In terms of assembly, homotetramer; dimer of dimers.

The protein resides in the cytoplasm. The catalysed reaction is L-aspartate 4-semialdehyde + pyruvate = (2S,4S)-4-hydroxy-2,3,4,5-tetrahydrodipicolinate + H2O + H(+). The protein operates within amino-acid biosynthesis; L-lysine biosynthesis via DAP pathway; (S)-tetrahydrodipicolinate from L-aspartate: step 3/4. Catalyzes the condensation of (S)-aspartate-beta-semialdehyde [(S)-ASA] and pyruvate to 4-hydroxy-tetrahydrodipicolinate (HTPA). This is 4-hydroxy-tetrahydrodipicolinate synthase from Vibrio vulnificus (strain YJ016).